We begin with the raw amino-acid sequence, 464 residues long: Glutamyl-tRNA reductase (464 aa).

Residues 47–50, Ser-145, 150–152, and Gln-156 each bind substrate; these read TCNR and EPQ. The active-site Nucleophile is the Cys-48. 225 to 230 lines the NADP(+) pocket; it reads AAGEMN.

It belongs to the glutamyl-tRNA reductase family. In terms of assembly, homodimer.

It catalyses the reaction (S)-4-amino-5-oxopentanoate + tRNA(Glu) + NADP(+) = L-glutamyl-tRNA(Glu) + NADPH + H(+). It participates in porphyrin-containing compound metabolism; protoporphyrin-IX biosynthesis; 5-aminolevulinate from L-glutamyl-tRNA(Glu): step 1/2. Its function is as follows. Catalyzes the NADPH-dependent reduction of glutamyl-tRNA(Glu) to glutamate 1-semialdehyde (GSA). This is Glutamyl-tRNA reductase from Psychrobacter cryohalolentis (strain ATCC BAA-1226 / DSM 17306 / VKM B-2378 / K5).